The primary structure comprises 356 residues: Glutamine synthetase cytosolic isozyme (356 aa).

The GS beta-grasp domain maps to 19 to 99 (IIAEYIWIGG…VMCDAYTPAG (81 aa)). The disordered stretch occupies residues 38 to 66 (RTLPGPVTDPSQLPKWNYDGSSTGQAPGE). A GS catalytic domain is found at 106 to 356 (KRHAAAKIFS…IADTTILWKP (251 aa)).

It belongs to the glutamine synthetase family. Homooctamer.

The protein resides in the cytoplasm. It carries out the reaction L-glutamate + NH4(+) + ATP = L-glutamine + ADP + phosphate + H(+). This is Glutamine synthetase cytosolic isozyme from Medicago sativa (Alfalfa).